We begin with the raw amino-acid sequence, 138 residues long: Ribosome-binding factor A (138 aa).

The disordered stretch occupies residues 117–138 (AEDGQHQEGPASADAKPESTEE).

This sequence belongs to the RbfA family. Monomer. Binds 30S ribosomal subunits, but not 50S ribosomal subunits or 70S ribosomes.

The protein resides in the cytoplasm. Its function is as follows. One of several proteins that assist in the late maturation steps of the functional core of the 30S ribosomal subunit. Associates with free 30S ribosomal subunits (but not with 30S subunits that are part of 70S ribosomes or polysomes). Required for efficient processing of 16S rRNA. May interact with the 5'-terminal helix region of 16S rRNA. In Pseudomonas syringae pv. syringae (strain B728a), this protein is Ribosome-binding factor A.